The following is a 499-amino-acid chain: Protein flp (499 aa).

A run of 4 helical transmembrane segments spans residues 6-26 (LYFLSISIIILVAISIAIYIT), 389-409 (FNIVTVLMTTLILLAFIFSAY), 433-453 (LTLCLCIAIALILYALPYLIL), and 471-491 (LTLTTAFIALFSMLITLLLIL).

Its subcellular location is the cell membrane. Its precise function is unknown. Has no penicillin-binding activity and is not involved in methicillin resistance. The polypeptide is Protein flp (flp) (Staphylococcus aureus (strain MRSA252)).